The chain runs to 537 residues: CTP synthase (537 aa).

The amidoligase domain stretch occupies residues 1–265 (MTKFIFVTGG…GKYLVKRLGL (265 aa)). Position 13 (Ser-13) interacts with CTP. Ser-13 is a UTP binding site. Position 14–19 (14–19 (GLGKGI)) interacts with ATP. Residue Tyr-54 participates in L-glutamine binding. Asp-71 is an ATP binding site. Mg(2+)-binding residues include Asp-71 and Glu-139. CTP contacts are provided by residues 146 to 148 (DIE), 186 to 191 (KTKPTQ), and Lys-222. Residues 186 to 191 (KTKPTQ) and Lys-222 each bind UTP. Residues 290–532 (EIAIVGKYVK…VKAAKEYKQE (243 aa)) enclose the Glutamine amidotransferase type-1 domain. L-glutamine is bound at residue Gly-351. The active-site Nucleophile; for glutamine hydrolysis is Cys-378. Residues 379 to 382 (FGFQ), Glu-402, and Arg-459 each bind L-glutamine. Catalysis depends on residues His-505 and Glu-507.

The protein belongs to the CTP synthase family. In terms of assembly, homotetramer.

It carries out the reaction UTP + L-glutamine + ATP + H2O = CTP + L-glutamate + ADP + phosphate + 2 H(+). The catalysed reaction is L-glutamine + H2O = L-glutamate + NH4(+). It catalyses the reaction UTP + NH4(+) + ATP = CTP + ADP + phosphate + 2 H(+). It participates in pyrimidine metabolism; CTP biosynthesis via de novo pathway; CTP from UDP: step 2/2. With respect to regulation, allosterically activated by GTP, when glutamine is the substrate; GTP has no effect on the reaction when ammonia is the substrate. The allosteric effector GTP functions by stabilizing the protein conformation that binds the tetrahedral intermediate(s) formed during glutamine hydrolysis. Inhibited by the product CTP, via allosteric rather than competitive inhibition. Catalyzes the ATP-dependent amination of UTP to CTP with either L-glutamine or ammonia as the source of nitrogen. Regulates intracellular CTP levels through interactions with the four ribonucleotide triphosphates. This is CTP synthase from Pyrococcus abyssi (strain GE5 / Orsay).